A 221-amino-acid polypeptide reads, in one-letter code: uncharacterized protein (221 aa).

Over residues 1–11 (MGEKSRRKGPA) the composition is skewed to basic residues. Disordered stretches follow at residues 1–23 (MGEK…GRTC) and 139–169 (SNFQ…SAPE). 2 stretches are compositionally biased toward basic and acidic residues: residues 13–23 (RHADGKLGRTC) and 155–168 (DKRS…RSAP).

This is an uncharacterized protein from Homo sapiens (Human).